The chain runs to 232 residues: MIIEKKIKNYTVFVKKDGEKYIEIFKDFLSYNHQVIKVFRNIEDTKVVLINTDYGKYILKVFSPKVKNTERFFKSLVKGDYYEKLFHQTDRVRREGFAALNDFYLLAEIKTLRYVKTYVMIIEYIEGIELVDMPEISDEVRGKIKQSIYSLHQHGMVSGDPHKGNFILQGNEIRIIDLSGKRPSRQRKAKDRIDLERHYGIKNNVRDIGFYLLIYKKKLRNFLRRIKGKEKR.

Belongs to the protein kinase superfamily. RfaY/WaaY family.

The catalysed reaction is alpha-D-Glc-(1-&gt;3)-[L-alpha-D-Hep-(1-&gt;7)]-L-alpha-D-Hep-(1-&gt;3)-4-O-PO3(2-)-L-alpha-D-Hep-(1-&gt;5)-[alpha-Kdo-(2-&gt;4)]-alpha-Kdo-(2-&gt;6)-lipid A + ATP = alpha-D-Glc-(1-&gt;3)-[L-alpha-D-Hep-(1-&gt;7)]-4-O-PO3(2-)-L-alpha-D-Hep-(1-&gt;3)-4-O-PO3(2-)-L-alpha-D-Hep-(1-&gt;5)-[alpha-Kdo-(2-&gt;4)]-alpha-Kdo-(2-&gt;6)-lipid A + ADP + H(+). It functions in the pathway bacterial outer membrane biogenesis; LPS core biosynthesis. Its function is as follows. Kinase involved in the biosynthesis of the core oligosaccharide region of lipopolysaccharide (LPS). Catalyzes the phosphorylation of the second heptose unit (HepII) of the inner core. This is Lipopolysaccharide core heptose(II) kinase WaaY from Salmonella typhimurium (strain LT2 / SGSC1412 / ATCC 700720).